Here is a 409-residue protein sequence, read N- to C-terminus: Peptide chain release factor subunit 1 (409 aa).

This sequence belongs to the eukaryotic release factor 1 family. In terms of assembly, heterodimer of two subunits, one of which binds GTP.

It localises to the cytoplasm. In terms of biological role, directs the termination of nascent peptide synthesis (translation) in response to the termination codons UAA, UAG and UGA. The polypeptide is Peptide chain release factor subunit 1 (Methanopyrus kandleri (strain AV19 / DSM 6324 / JCM 9639 / NBRC 100938)).